The primary structure comprises 149 residues: Large ribosomal subunit protein bL9 (149 aa).

Belongs to the bacterial ribosomal protein bL9 family.

In terms of biological role, binds to the 23S rRNA. In Geobacillus kaustophilus (strain HTA426), this protein is Large ribosomal subunit protein bL9.